A 94-amino-acid chain; its full sequence is Co-chaperonin GroES (94 aa).

This sequence belongs to the GroES chaperonin family. Heptamer of 7 subunits arranged in a ring. Interacts with the chaperonin GroEL.

The protein localises to the cytoplasm. Its function is as follows. Together with the chaperonin GroEL, plays an essential role in assisting protein folding. The GroEL-GroES system forms a nano-cage that allows encapsulation of the non-native substrate proteins and provides a physical environment optimized to promote and accelerate protein folding. GroES binds to the apical surface of the GroEL ring, thereby capping the opening of the GroEL channel. This Listeria welshimeri serovar 6b (strain ATCC 35897 / DSM 20650 / CCUG 15529 / CIP 8149 / NCTC 11857 / SLCC 5334 / V8) protein is Co-chaperonin GroES.